Consider the following 219-residue polypeptide: Flagellin B4 (219 aa).

The propeptide occupies 1 to 5 (MHRKG).

The protein belongs to the archaeal flagellin family.

It localises to the archaeal flagellum. Flagellin is the subunit protein which polymerizes to form the filaments of archaeal flagella. The chain is Flagellin B4 (flaB4) from Pyrococcus abyssi (strain GE5 / Orsay).